The sequence spans 1362 residues: DNA-directed RNA polymerase subunit beta (1362 aa).

The protein belongs to the RNA polymerase beta chain family. As to quaternary structure, the RNAP catalytic core consists of 2 alpha, 1 beta, 1 beta' and 1 omega subunit. When a sigma factor is associated with the core the holoenzyme is formed, which can initiate transcription.

It catalyses the reaction RNA(n) + a ribonucleoside 5'-triphosphate = RNA(n+1) + diphosphate. Functionally, DNA-dependent RNA polymerase catalyzes the transcription of DNA into RNA using the four ribonucleoside triphosphates as substrates. The protein is DNA-directed RNA polymerase subunit beta of Acidithiobacillus ferrooxidans (strain ATCC 23270 / DSM 14882 / CIP 104768 / NCIMB 8455) (Ferrobacillus ferrooxidans (strain ATCC 23270)).